The following is a 339-amino-acid chain: MSYSAPSQITQRQLAYFEGKHVLIAGELNDNFPLELDKHCASTSIFTTNYGYYKQFSENPKINCYFGTELIEESHADMILLYWPKAKAEAEYLLTMLLAKLGKDTEIIVVGENRSGVKSVEKMFANFGPMNKLDSARRCSFYWGQCTETAPSFNLQDWFKEYQVQFKEHTIEVRSLPGVFSHGEFDKGSELLLQTLPSLRGHVLDFGCGAGVLGSVMKTINPKIHLDMVDISAFAIASSIETLKANGLEGNVFASDVYSDTKQNYQFIVSNPPFHAGLKTHYSSTEELLQKAPQNLTHSGQMIFVANSFLQYPPIVEKVFGHCNTLAKNNKFRIYSAQK.

The protein belongs to the methyltransferase superfamily. RsmC family. In terms of assembly, monomer.

Its subcellular location is the cytoplasm. The catalysed reaction is guanosine(1207) in 16S rRNA + S-adenosyl-L-methionine = N(2)-methylguanosine(1207) in 16S rRNA + S-adenosyl-L-homocysteine + H(+). Its function is as follows. Specifically methylates the guanine in position 1207 of 16S rRNA in the 30S particle. This chain is Ribosomal RNA small subunit methyltransferase C, found in Aliivibrio salmonicida (strain LFI1238) (Vibrio salmonicida (strain LFI1238)).